Consider the following 492-residue polypeptide: Trigger factor (492 aa).

In terms of domain architecture, PPIase FKBP-type spans 169-254; it reads GDRVSIDYVG…VKEVSKPGEL (86 aa). The tract at residues 441–492 is disordered; it reads LMADDEDAETTTKAKPAKKAAAKKAEAKANEDEAEEPKKKAAPKKKAAKDAE. Basic and acidic residues predominate over residues 463 to 479; that stretch reads KKAEAKANEDEAEEPKK. Basic residues predominate over residues 480–492; that stretch reads KAAPKKKAAKDAE.

Belongs to the FKBP-type PPIase family. Tig subfamily.

It localises to the cytoplasm. The catalysed reaction is [protein]-peptidylproline (omega=180) = [protein]-peptidylproline (omega=0). Functionally, involved in protein export. Acts as a chaperone by maintaining the newly synthesized protein in an open conformation. Functions as a peptidyl-prolyl cis-trans isomerase. The sequence is that of Trigger factor from Mesorhizobium japonicum (strain LMG 29417 / CECT 9101 / MAFF 303099) (Mesorhizobium loti (strain MAFF 303099)).